The chain runs to 102 residues: Small ribosomal subunit protein uS10 (102 aa).

Belongs to the universal ribosomal protein uS10 family. Part of the 30S ribosomal subunit.

In terms of biological role, involved in the binding of tRNA to the ribosomes. In Lactobacillus delbrueckii subsp. bulgaricus (strain ATCC 11842 / DSM 20081 / BCRC 10696 / JCM 1002 / NBRC 13953 / NCIMB 11778 / NCTC 12712 / WDCM 00102 / Lb 14), this protein is Small ribosomal subunit protein uS10.